A 1054-amino-acid polypeptide reads, in one-letter code: NACHT, LRR and PYD domains-containing protein 12 (1054 aa).

In terms of domain architecture, Pyrin spans 1 to 95; it reads MLPSTARDGL…WERGQGEDLV (95 aa). Residues 129–201 enclose the FISNA domain; the sequence is YKDYVRRKFQ…SPIQMETLFE (73 aa). In terms of domain architecture, NACHT spans 211-528; it reads HTVVLQGAAG…EFFAAMYCAL (318 aa). 217 to 224 is a binding site for ATP; sequence GAAGMGKS. 8 LRR repeats span residues 821 to 841, 850 to 871, 878 to 899, 907 to 928, 935 to 955, 964 to 985, 992 to 1013, and 1021 to 1042; these read YLVE…KLLC, RLRT…DLAS, SLLE…LLCE, KLQT…GIAS, CLQE…QLLG, RLQK…DLSS, TLHE…LLCK, and KLRV…RMAA.

It belongs to the NLRP family. As to quaternary structure, interacts (via pyrin domain) with ASC. Interacts (via pyrin domain) with FAF1 (via UBA domain). Interacts with MAP3K14; this interaction promotes proteasomal degradation of MAP3K14. Interacts with NOD2; this interaction promotes degradation of NOD2 through the ubiquitin-proteasome pathway. Interacts with HSPA1A and HSPA8. Interacts with HSP90AA1. Interacts with TRIM25; this interaction inhibits RIGI-mediated signaling pathway. As to expression, mainly expressed in dendritic cells (DCs) and neutrophils.

The protein localises to the cytoplasm. In terms of biological role, plays an essential role as an potent mitigator of inflammation. Primarily expressed in dendritic cells and macrophages, inhibits both canonical and non-canonical NF-kappa-B and ERK activation pathways. Functions as a negative regulator of NOD2 by targeting it to degradation via the proteasome pathway. In turn, promotes bacterial tolerance. Also inhibits the RIGI-mediated immune signaling against RNA viruses by reducing the E3 ubiquitin ligase TRIM25-mediated 'Lys-63'-linked RIGI activation but enhancing the E3 ubiquitin ligase RNF125-mediated 'Lys-48'-linked RIGI degradation. Also acts as a negative regulator of inflammatory response to mitigate obesity and obesity-associated diseases in adipose tissue. This Mus musculus (Mouse) protein is NACHT, LRR and PYD domains-containing protein 12 (Nlrp12).